Consider the following 252-residue polypeptide: MKTTTALVTGATAGFGLAICKKLIEAGYKVIGTGRRADRLAEIHSQLGNNFLPLAFDIRDEQATINALNTLPEGWQAVDLLVNNAGLALGLEPAHKADLQDWYQMIDTNIKGLVTITRLVLPNMVARNYGQIINLSSIAGTYPYAGSNVYGGTKAFVTQFSLNLRADLAGTKIRVSNVEPGLCGGTEFSNVRFHGDDERAAKVYENVQSVQPEDIANIVLWLHQQPEHVNINRIEVMPTAQSFAGMSVSKEK.

7–31 (LVTGATAGFGLAICKKLIEAGYKVI) is a binding site for NADP(+). Ser-137 serves as a coordination point for substrate. Tyr-150 functions as the Proton acceptor in the catalytic mechanism.

The protein belongs to the short-chain dehydrogenases/reductases (SDR) family.

This Haemophilus influenzae (strain ATCC 51907 / DSM 11121 / KW20 / Rd) protein is Probable NADP-dependent dehydrogenase HI_1430.